The following is a 155-amino-acid chain: Regulatory protein RecX (155 aa).

Belongs to the RecX family.

The protein localises to the cytoplasm. Modulates RecA activity. The chain is Regulatory protein RecX from Pseudomonas fluorescens (strain SBW25).